Reading from the N-terminus, the 101-residue chain is Ubiquitin-related modifier 1 (101 aa).

Glycine 101 carries the 1-thioglycine modification. Glycine 101 participates in a covalent cross-link: Glycyl lysine isopeptide (Gly-Lys) (interchain with K-? in acceptor proteins).

It belongs to the URM1 family. C-terminal thiocarboxylation occurs in 2 steps, it is first acyl-adenylated (-COAMP) via the hesA/moeB/thiF part of the MOCS3 homolog, then thiocarboxylated (-COSH) via the rhodanese domain of the MOCS3 homolog.

It is found in the cytoplasm. The protein operates within tRNA modification; 5-methoxycarbonylmethyl-2-thiouridine-tRNA biosynthesis. In terms of biological role, acts as a sulfur carrier required for 2-thiolation of mcm(5)S(2)U at tRNA wobble positions of cytosolic tRNA(Lys), tRNA(Glu) and tRNA(Gln). Serves as sulfur donor in tRNA 2-thiolation reaction by being thiocarboxylated (-COSH) at its C-terminus by MOCS3. The sulfur is then transferred to tRNA to form 2-thiolation of mcm(5)S(2)U. Also acts as a ubiquitin-like protein (UBL) that is covalently conjugated via an isopeptide bond to lysine residues of target proteins. The thiocarboxylated form serves as substrate for conjugation and oxidative stress specifically induces the formation of UBL-protein conjugates. The chain is Ubiquitin-related modifier 1 from Gallus gallus (Chicken).